The sequence spans 210 residues: HTH-type transcriptional repressor FabR (210 aa).

One can recognise an HTH tetR-type domain in the interval 10–70 (KTRRSLVEAA…TMVDESGLML (61 aa)). The segment at residues 33-52 (SLREVAREAGIAPTSFYRHF) is a DNA-binding region (H-T-H motif).

As to quaternary structure, homodimer.

The protein localises to the cytoplasm. In terms of biological role, represses the transcription of fabB, involved in unsaturated fatty acid (UFA) biosynthesis. By controlling UFA production, FabR directly influences the physical properties of the membrane bilayer. The chain is HTH-type transcriptional repressor FabR from Salmonella choleraesuis (strain SC-B67).